A 217-amino-acid polypeptide reads, in one-letter code: Somatotropin (217 aa).

Residues 1-26 (MAAGSRTSLLLAFALLCLPWLQEGSA) form the signal peptide. H44 lines the Zn(2+) pocket. A disulfide bond links C79 and C191. Residue S132 is modified to Phosphoserine. Zn(2+) is bound at residue E200. A disulfide bridge links C208 with C215.

This sequence belongs to the somatotropin/prolactin family.

The protein resides in the secreted. Functionally, plays an important role in growth control. Its major role in stimulating body growth is to stimulate the liver and other tissues to secrete IGF1. It stimulates both the differentiation and proliferation of myoblasts. It also stimulates amino acid uptake and protein synthesis in muscle and other tissues. This chain is Somatotropin (GH1), found in Macaca mulatta (Rhesus macaque).